A 299-amino-acid chain; its full sequence is Oxygen-dependent coproporphyrinogen-III oxidase (299 aa).

A substrate-binding site is contributed by S92. The Mn(2+) site is built by H96 and H106. Catalysis depends on H106, which acts as the Proton donor. 108–110 (NVR) contacts substrate. Positions 145 and 175 each coordinate Mn(2+). Residues 240–275 (YVEFNLVWDRGTLFGLQTGGRTESILMSMPPLVRWE) form an important for dimerization region. Residue 258–260 (GGR) participates in substrate binding.

It belongs to the aerobic coproporphyrinogen-III oxidase family. Homodimer. Mn(2+) serves as cofactor.

The protein resides in the cytoplasm. The catalysed reaction is coproporphyrinogen III + O2 + 2 H(+) = protoporphyrinogen IX + 2 CO2 + 2 H2O. Its pathway is porphyrin-containing compound metabolism; protoporphyrin-IX biosynthesis; protoporphyrinogen-IX from coproporphyrinogen-III (O2 route): step 1/1. Functionally, involved in the heme biosynthesis. Catalyzes the aerobic oxidative decarboxylation of propionate groups of rings A and B of coproporphyrinogen-III to yield the vinyl groups in protoporphyrinogen-IX. The sequence is that of Oxygen-dependent coproporphyrinogen-III oxidase from Escherichia coli (strain SMS-3-5 / SECEC).